Here is a 254-residue protein sequence, read N- to C-terminus: tRNA (guanine-N(1)-)-methyltransferase (254 aa).

S-adenosyl-L-methionine contacts are provided by residues Gly-113 and 133-138 (LGDFVL).

Belongs to the RNA methyltransferase TrmD family. As to quaternary structure, homodimer.

The protein resides in the cytoplasm. The catalysed reaction is guanosine(37) in tRNA + S-adenosyl-L-methionine = N(1)-methylguanosine(37) in tRNA + S-adenosyl-L-homocysteine + H(+). Specifically methylates guanosine-37 in various tRNAs. This Herpetosiphon aurantiacus (strain ATCC 23779 / DSM 785 / 114-95) protein is tRNA (guanine-N(1)-)-methyltransferase.